The chain runs to 236 residues: Thiamine-phosphate synthase (236 aa).

4-amino-2-methyl-5-(diphosphooxymethyl)pyrimidine is bound by residues 57 to 61 (QLRDK) and N89. Positions 90 and 109 each coordinate Mg(2+). Residue S128 participates in 4-amino-2-methyl-5-(diphosphooxymethyl)pyrimidine binding. 154-156 (TPS) is a binding site for 2-[(2R,5Z)-2-carboxy-4-methylthiazol-5(2H)-ylidene]ethyl phosphate. K157 lines the 4-amino-2-methyl-5-(diphosphooxymethyl)pyrimidine pocket. 2-[(2R,5Z)-2-carboxy-4-methylthiazol-5(2H)-ylidene]ethyl phosphate contacts are provided by residues G185 and 205-206 (IS).

Belongs to the thiamine-phosphate synthase family. It depends on Mg(2+) as a cofactor.

The enzyme catalyses 2-[(2R,5Z)-2-carboxy-4-methylthiazol-5(2H)-ylidene]ethyl phosphate + 4-amino-2-methyl-5-(diphosphooxymethyl)pyrimidine + 2 H(+) = thiamine phosphate + CO2 + diphosphate. The catalysed reaction is 2-(2-carboxy-4-methylthiazol-5-yl)ethyl phosphate + 4-amino-2-methyl-5-(diphosphooxymethyl)pyrimidine + 2 H(+) = thiamine phosphate + CO2 + diphosphate. It catalyses the reaction 4-methyl-5-(2-phosphooxyethyl)-thiazole + 4-amino-2-methyl-5-(diphosphooxymethyl)pyrimidine + H(+) = thiamine phosphate + diphosphate. The protein operates within cofactor biosynthesis; thiamine diphosphate biosynthesis; thiamine phosphate from 4-amino-2-methyl-5-diphosphomethylpyrimidine and 4-methyl-5-(2-phosphoethyl)-thiazole: step 1/1. Condenses 4-methyl-5-(beta-hydroxyethyl)thiazole monophosphate (THZ-P) and 2-methyl-4-amino-5-hydroxymethyl pyrimidine pyrophosphate (HMP-PP) to form thiamine monophosphate (TMP). This is Thiamine-phosphate synthase from Roseiflexus sp. (strain RS-1).